A 756-amino-acid polypeptide reads, in one-letter code: Hormone-sensitive lipase (756 aa).

Residues 350–352 carry the Involved in the stabilization of the negatively charged intermediate by the formation of the oxyanion hole motif; it reads HGG. Serine 424 is an active-site residue. Disordered stretches follow at residues 542–570 and 581–600; these read SVSK…TDSL and RNSS…ETLG. Serine 552 bears the Phosphoserine; by PKA mark. Serine 554 is modified (phosphoserine; by AMPK). The span at 581-596 shows a compositional bias: polar residues; that stretch reads RNSSDTTDTPELSLSA. 2 positions are modified to phosphoserine: serine 595 and serine 649. Residues aspartate 692 and histidine 722 contribute to the active site.

Belongs to the 'GDXG' lipolytic enzyme family. Monomer and homodimer. Interacts with CAVIN1 in the adipocyte cytoplasm. Interacts with PLIN5. Phosphorylation by AMPK reduces its translocation towards the lipid droplets.

It localises to the cell membrane. The protein localises to the membrane. Its subcellular location is the caveola. It is found in the cytoplasm. The protein resides in the cytosol. It localises to the lipid droplet. It catalyses the reaction a diacylglycerol + H2O = a monoacylglycerol + a fatty acid + H(+). The catalysed reaction is a triacylglycerol + H2O = a diacylglycerol + a fatty acid + H(+). It carries out the reaction a monoacylglycerol + H2O = glycerol + a fatty acid + H(+). The enzyme catalyses Hydrolyzes glycerol monoesters of long-chain fatty acids.. It catalyses the reaction 1,2-di-(9Z-octadecenoyl)-glycerol + (9Z)-octadecenoate + H(+) = 1,2,3-tri-(9Z-octadecenoyl)-glycerol + H2O. The catalysed reaction is 2,3-di-(9Z)-octadecenoyl-sn-glycerol + H2O = 2-(9Z-octadecenoyl)-glycerol + (9Z)-octadecenoate + H(+). It carries out the reaction cholesteryl (9Z-octadecenoate) + H2O = cholesterol + (9Z)-octadecenoate + H(+). The enzyme catalyses 1,2,3-tri-(9Z-octadecenoyl)-glycerol + H2O = di-(9Z)-octadecenoylglycerol + (9Z)-octadecenoate + H(+). It catalyses the reaction all-trans-retinyl hexadecanoate + H2O = all-trans-retinol + hexadecanoate + H(+). The catalysed reaction is 1,2-di-(9Z-octadecenoyl)-glycerol + H2O = (9Z-octadecenoyl)-glycerol + (9Z)-octadecenoate + H(+). It carries out the reaction 2-(5Z,8Z,11Z,14Z-eicosatetraenoyl)-glycerol + H2O = glycerol + (5Z,8Z,11Z,14Z)-eicosatetraenoate + H(+). The enzyme catalyses 1-(9Z-octadecenoyl)-glycerol + H2O = glycerol + (9Z)-octadecenoate + H(+). It catalyses the reaction 2-(9Z-octadecenoyl)-glycerol + H2O = glycerol + (9Z)-octadecenoate + H(+). The catalysed reaction is 1-O-hexadecyl-2-acetyl-sn-glycerol + H2O = 1-O-hexadecyl-sn-glycerol + acetate + H(+). It carries out the reaction 1,2-di-(9Z-octadecenoyl)-sn-glycerol + H2O = (9Z-octadecenoyl)-glycerol + (9Z)-octadecenoate + H(+). The enzyme catalyses 1,3-di-(9Z-octadecenoyl)-glycerol + H2O = 1-(9Z-octadecenoyl)-glycerol + (9Z)-octadecenoate + H(+). It catalyses the reaction 1,2-di-(9Z-octadecenoyl)-glycerol + H2O = 2-(9Z-octadecenoyl)-glycerol + (9Z)-octadecenoate + H(+). The protein operates within glycerolipid metabolism; triacylglycerol degradation. In terms of biological role, lipase with broad substrate specificity, catalyzing the hydrolysis of triacylglycerols (TAGs), diacylglycerols (DAGs), monoacylglycerols (MAGs), cholesteryl esters and retinyl esters. Shows a preferential hydrolysis of DAGs over TAGs and MAGs. Preferentially hydrolyzes fatty acid (FA) esters at the sn-3 position of the glycerol backbone in DAGs and FA esters at the sn-1 and sn-2 positions of the glycerol backbone in TAGs. Catalyzes the hydrolysis of 2-arachidonoylglycerol, an endocannabinoid and of 2-acetyl monoalkylglycerol ether, the penultimate precursor of the pathway for de novo synthesis of platelet-activating factor. In adipose tissue and heart, it primarily hydrolyzes stored triglycerides to free fatty acids, while in steroidogenic tissues, it principally converts cholesteryl esters to free cholesterol for steroid hormone production. The polypeptide is Hormone-sensitive lipase (LIPE) (Bos taurus (Bovine)).